The sequence spans 623 residues: Protein Atg16l2 (623 aa).

A compositionally biased stretch (basic and acidic residues) spans 64-79; the sequence is PKDAISTRHEDWREEV. Residues 64 to 93 form a disordered region; the sequence is PKDAISTRHEDWREEVSGTGPDQVSSPASL. Positions 116 to 229 form a coiled coil; it reads VKKSAALDTL…ANQALVSQEL (114 aa). WD repeat units follow at residues 338–377, 382–421, 424–458, 459–502, 504–543, 550–589, and 593–623; these read AHLS…LEAN, GAGG…SKET, GHKD…LGRA, YCSR…CIQV, PVQG…IRQV, KCSS…LETS, and PHCT…VLWH.

Belongs to the WD repeat ATG16 family. In terms of assembly, homooligomer. Heterooligomer with ATG16L2. Interacts with ATG5. Self-oligomerizes to form a 800-kDa complex composed of ATG12-ATG5 and ATG16L2. Interacts with RAB33B. Widely expressed.

It localises to the cytoplasm. The protein localises to the cytosol. Functionally, may play a role in regulating epithelial homeostasis in an ATG16L1-dependent manner. The polypeptide is Protein Atg16l2 (Atg16l2) (Mus musculus (Mouse)).